The chain runs to 232 residues: Ribose-5-phosphate isomerase A (232 aa).

Substrate-binding positions include 28–31 (TGST), 83–86 (DGAD), and 96–99 (KGGG). E105 acts as the Proton acceptor in catalysis. A substrate-binding site is contributed by K123.

The protein belongs to the ribose 5-phosphate isomerase family. Homodimer.

It carries out the reaction aldehydo-D-ribose 5-phosphate = D-ribulose 5-phosphate. Its pathway is carbohydrate degradation; pentose phosphate pathway; D-ribose 5-phosphate from D-ribulose 5-phosphate (non-oxidative stage): step 1/1. Functionally, catalyzes the reversible conversion of ribose-5-phosphate to ribulose 5-phosphate. This chain is Ribose-5-phosphate isomerase A, found in Rhizobium etli (strain ATCC 51251 / DSM 11541 / JCM 21823 / NBRC 15573 / CFN 42).